Here is a 548-residue protein sequence, read N- to C-terminus: WAP, Kazal, immunoglobulin, Kunitz and NTR domain-containing protein 1 (548 aa).

The signal sequence occupies residues 1–19 (MPALRPLLPLLLLLRLTSG). Residues 26–79 (LGSHPGVCPNQLSPNLWVDAQSTCERECSRDQDCAAAEKCCINVCGLHSCVAAR) enclose the WAP domain. Cystine bridges form between Cys33–Cys66, Cys49–Cys70, Cys53–Cys65, Cys59–Cys75, Cys116–Cys146, Cys120–Cys139, and Cys128–Cys157. The region spanning 108 to 159 (WDGQPVCRCRDRCEKEPSFTCASDGLTYYNRCYMDAEACLRGLHLHIVPCKH) is the Kazal-like domain. The segment at 164 to 184 (PPSSPGPPETTARPTPGAAPV) is disordered. The region spanning 186–279 (PALYSSPSPQ…GLLRADFPLS (94 aa)) is the Ig-like C2-type domain. Cystine bridges form between Cys207/Cys263, Cys299/Cys351, Cys306/Cys334, Cys326/Cys347, Cys359/Cys409, Cys368/Cys392, Cys384/Cys405, Cys417/Cys489, Cys420/Cys491, and Cys431/Cys540. 2 consecutive BPTI/Kunitz inhibitor domains span residues 299–351 (CLPD…QQAC) and 359–409 (CVLP…EDAC). Positions 409 to 540 (CPVPRTPPCR…ILELLEKQAC (132 aa)) constitute an NTR domain. The N-linked (GlcNAc...) asparagine glycan is linked to Asn493.

Belongs to the WFIKKN family. Expressed in pancreas, kidney, liver, placenta, and lung.

The protein resides in the secreted. Functionally, protease-inhibitor that contains multiple distinct protease inhibitor domains. Probably has serine protease- and metalloprotease-inhibitor activity. This is WAP, Kazal, immunoglobulin, Kunitz and NTR domain-containing protein 1 (WFIKKN1) from Homo sapiens (Human).